The primary structure comprises 149 residues: Calmodulin-2 (149 aa).

The residue at position 2 (A2) is an N-acetylalanine. EF-hand domains lie at 8–43 (EQIA…LGQN), 44–79 (PTEA…KMKD), 81–116 (DSEE…LGEK), and 117–149 (LTDE…MMAK). Positions 21, 23, 25, 27, 32, 57, 59, 61, 63, 68, 94, 96, 98, and 105 each coordinate Ca(2+). K116 carries the N6,N6,N6-trimethyllysine modification. Residues D130, D132, D134, Q136, and E141 each coordinate Ca(2+).

It belongs to the calmodulin family.

Functionally, calmodulin mediates the control of a large number of enzymes, ion channels and other proteins by Ca(2+). Among the enzymes to be stimulated by the calmodulin-Ca(2+) complex are a number of protein kinases and phosphatases. The polypeptide is Calmodulin-2 (CAM2) (Oryza sativa subsp. indica (Rice)).